A 125-amino-acid polypeptide reads, in one-letter code: uncharacterized protein (125 aa).

Belongs to the asfivirus B125R family.

This is an uncharacterized protein from Ornithodoros (relapsing fever ticks).